A 509-amino-acid polypeptide reads, in one-letter code: Protein disulfide-isomerase (509 aa).

An N-terminal signal peptide occupies residues 1–19; it reads MLSRSLLCLALAWVARVGA. Residues 20 to 136 enclose the Thioredoxin 1 domain; that stretch reads DAPEEEDNVL…IVNWLKKRTG (117 aa). Catalysis depends on nucleophile residues cysteine 55 and cysteine 58. Residues cysteine 55 and cysteine 58 are joined by a disulfide bond. Lysine 202 is subject to N6-acetyllysine. N6-succinyllysine is present on residues lysine 224 and lysine 273. Phosphoserine occurs at positions 333 and 359. The region spanning 335-477 is the Thioredoxin 2 domain; it reads ELTAEKITEF…FKKFLESGGQ (143 aa). Catalysis depends on nucleophile residues cysteine 399 and cysteine 402. The cysteines at positions 399 and 402 are disulfide-linked. A Phosphoserine modification is found at serine 429. The tract at residues 473-509 is disordered; it reads ESGGQDGAGDDDDVDLEEALEPDMEEDDDQKAVKDEL. Positions 480–501 are enriched in acidic residues; that stretch reads AGDDDDVDLEEALEPDMEEDDD. A Prevents secretion from ER motif is present at residues 506–509; it reads KDEL.

The protein belongs to the protein disulfide isomerase family. Heterodimer; heterodimerizes with the protein microsomal triglyceride transfer MTTP. Homodimer. Homodimer. Monomers and homotetramers may also occur. Interacts with P4HA2, forming a heterotetramer consisting of 2 alpha subunits (P4HA2) and 2 beta (P4HB), where P4HB plays the role of a structural subunit; this tetramer catalyzes the formation of 4-hydroxyproline in collagen. Also constitutes the structural subunit of the microsomal triacylglycerol transfer protein MTTP in mammalian cells. Stabilizes both enzymes and retain them in the ER without contributing to the catalytic activity. Binds UBQLN1. Interacts with ERO1B. Interacts with ILDR2. Interacts with ERN1/IRE1A (via N-terminus); the interaction is enhanced by phosphorylation of P4HB by FAM20C in response to endoplasmic reticulum stress and results in attenuation of ERN1 activity. Post-translationally, phosphorylation of Ser-359 by FAM20C is induced by endoplasmic reticulum stress and results in a functional switch from oxidoreductase to molecular chaperone. It also promotes interaction with ERN1.

It is found in the endoplasmic reticulum. The protein localises to the endoplasmic reticulum lumen. It localises to the melanosome. The protein resides in the cell membrane. The catalysed reaction is Catalyzes the rearrangement of -S-S- bonds in proteins.. Its function is as follows. This multifunctional protein catalyzes the formation, breakage and rearrangement of disulfide bonds. At the cell surface, seems to act as a reductase that cleaves disulfide bonds of proteins attached to the cell. May therefore cause structural modifications of exofacial proteins. Inside the cell, seems to form/rearrange disulfide bonds of nascent proteins. At high concentrations and following phosphorylation by FAM20C, functions as a chaperone that inhibits aggregation of misfolded proteins. At low concentrations, facilitates aggregation (anti-chaperone activity). May be involved with other chaperones in the structural modification of the TG precursor in hormone biogenesis. Also acts as a structural subunit of various enzymes such as prolyl 4-hydroxylase and microsomal triacylglycerol transfer protein MTTP. Receptor for LGALS9; the interaction retains P4HB at the cell surface of Th2 T helper cells, increasing disulfide reductase activity at the plasma membrane, altering the plasma membrane redox state and enhancing cell migration. This Cricetulus griseus (Chinese hamster) protein is Protein disulfide-isomerase (P4HB).